A 272-amino-acid polypeptide reads, in one-letter code: Phosphatidylglycerol--prolipoprotein diacylglyceryl transferase (272 aa).

Helical transmembrane passes span 21–41 (IAVH…IFVA), 60–80 (YIWW…VLFY), 101–121 (GVYA…FIIA), and 131–151 (VSFW…YIFG). Position 152 (arginine 152) interacts with a 1,2-diacyl-sn-glycero-3-phospho-(1'-sn-glycerol). The next 3 membrane-spanning stretches (helical) occupy residues 181–201 (PSQI…LAFY), 209–229 (GQLA…AEFF), and 244–264 (LTMG…FYVV).

Belongs to the Lgt family.

The protein localises to the cell inner membrane. It carries out the reaction L-cysteinyl-[prolipoprotein] + a 1,2-diacyl-sn-glycero-3-phospho-(1'-sn-glycerol) = an S-1,2-diacyl-sn-glyceryl-L-cysteinyl-[prolipoprotein] + sn-glycerol 1-phosphate + H(+). Its pathway is protein modification; lipoprotein biosynthesis (diacylglyceryl transfer). Functionally, catalyzes the transfer of the diacylglyceryl group from phosphatidylglycerol to the sulfhydryl group of the N-terminal cysteine of a prolipoprotein, the first step in the formation of mature lipoproteins. In Aliarcobacter butzleri (strain RM4018) (Arcobacter butzleri), this protein is Phosphatidylglycerol--prolipoprotein diacylglyceryl transferase.